The sequence spans 258 residues: Large ribosomal subunit protein uL5c (258 aa).

A chloroplast-targeting transit peptide spans 1-38 (MASTSLLQSTSSSFAGVRFHCRTSAAPRVGLSSFTVKA).

Component of the chloroplast large ribosomal subunit (LSU). Mature 70S chloroplast ribosomes of higher plants consist of a small (30S) and a large (50S) subunit. The 30S small subunit contains 1 molecule of ribosomal RNA (16S rRNA) and 24 different proteins. The 50S large subunit contains 3 rRNA molecules (23S, 5S and 4.5S rRNA) and 33 different proteins.

It localises to the plastid. It is found in the chloroplast. Component of the chloroplast ribosome (chloro-ribosome), a dedicated translation machinery responsible for the synthesis of chloroplast genome-encoded proteins, including proteins of the transcription and translation machinery and components of the photosynthetic apparatus. This chain is Large ribosomal subunit protein uL5c (RPL5), found in Spinacia oleracea (Spinach).